The sequence spans 228 residues: Phosphatidylglycerophosphate phosphatase PTPMT2 (228 aa).

The segment covering 1–10 (MTDETEEDDT) has biased composition (acidic residues). The tract at residues 1–30 (MTDETEEDDTTQQRSSRNDGVSKNKGKGFK) is disordered. Tyr-48 and Asp-126 together coordinate substrate. The region spanning 66 to 213 (WWDQIDEYLL…VEEFSRLQSP (148 aa)) is the Tyrosine-protein phosphatase domain. Cys-157 functions as the Phosphocysteine intermediate in the catalytic mechanism. The short motif at 157–163 (CKAGRGR) is the Glucan phosphatase signature motif CXAGXGR element. Substrate is bound at residue 158-163 (KAGRGR).

Belongs to the protein-tyrosine phosphatase family. Non-receptor class dual specificity subfamily. As to expression, expressed in roots, leaves, stems and flowers. In terms of tissue distribution, expressed at low levels in stems and flowers.

The enzyme catalyses O-phospho-L-seryl-[protein] + H2O = L-seryl-[protein] + phosphate. It carries out the reaction O-phospho-L-threonyl-[protein] + H2O = L-threonyl-[protein] + phosphate. The catalysed reaction is O-phospho-L-tyrosyl-[protein] + H2O = L-tyrosyl-[protein] + phosphate. It catalyses the reaction a 1,2-diacyl-sn-glycero-3-phospho-(1'-sn-glycero-3'-phosphate) + H2O = a 1,2-diacyl-sn-glycero-3-phospho-(1'-sn-glycerol) + phosphate. It functions in the pathway phospholipid metabolism; phosphatidylglycerol biosynthesis; phosphatidylglycerol from CDP-diacylglycerol: step 2/2. In terms of biological role, exhibits phosphatidylglycerophosphate phosphatase activity. Involved in root growth and columella cells organization. May possess protein phosphatase activity. This chain is Phosphatidylglycerophosphate phosphatase PTPMT2, found in Arabidopsis thaliana (Mouse-ear cress).